We begin with the raw amino-acid sequence, 228 residues long: RING1 and YY1-binding protein (228 aa).

Disordered stretches follow at residues 1 to 21 (MTMG…PAAD), 65 to 156 (QVAQ…RSTA), and 172 to 228 (DFKE…DESF). The segment at 21–50 (DEGFWDCSVCTFRNSAEAFKCSICDVRKGT) adopts a RanBP2-type zinc-finger fold. Basic and acidic residues predominate over residues 76–98 (PKKEKKEKVEKQDKEKPEKDKEI). A Glycyl lysine isopeptide (Lys-Gly) (interchain with G-Cter in SUMO2) cross-link involves residue Lys77. A Phosphoserine modification is found at Ser99. Residues 113–122 (PKSDILKDPP) show a composition bias toward basic and acidic residues. Phosphoserine is present on residues Ser123, Ser127, and Ser130. Over residues 124 to 143 (EANSIQSANATTKTSETNHT) the composition is skewed to polar residues. Residues 143–226 (TSRPRLKNVD…KGDMSAVNDE (84 aa)) are interaction with GABPB1 and FANK1. A compositionally biased stretch (low complexity) spans 179–204 (SSSTSSSTVTSSAGSEQQNQSSSGSE). At Ser227 the chain carries Phosphoserine.

In terms of assembly, monomer. Component of repressive BCOR complex containing Polycomb group subcomplex at least composed of BCOR, PCGF1, RING1 and RNF2/RING2. Component of PCR1-like complexes. Interacts with PCGF1. Part of a PCR1-like complex that contains AUTS2, PCGF5, RNF2, CSNK2B and RYBP. Interacts with RNF2; the interaction is direct. Interacts with CBX2, YAF2, RING1 and RNF2. Interacts with ubiquitin and ubiquitinated proteins. Interacts with ubiquitinated histone H2A. Interacts with apoptin, DEDD, FADD, CASP8, CASP10, YY1 and GABPB1. Together with GABPB1 and YY1, it forms a ternary complex, probably being the bridge factor between these two transcription factors. Interacts with MDM2, and thereby inhibits ubiquitination of TP53. Identified in a ternary complex containing MDM2, TP53 and RYBP. Interacts with FANK1; may prevent the ubiquitin-mediated proteasomal degradation of FANK1. Interacts with IFT57. Monoubiquitinated. As to expression, down-regulated in breast cancer tissues and in several breast cancer cell lines (at protein level). Widely expressed with highest levels in lymphoid tissues and placenta.

The protein localises to the nucleus. The protein resides in the cytoplasm. Its subcellular location is the nucleoplasm. Functionally, component of a Polycomb group (PcG) multiprotein PRC1-like complex, a complex class required to maintain the transcriptionally repressive state of many genes, including Hox genes, throughout development. PcG PRC1-like complex acts via chromatin remodeling and modification of histones; it mediates monoubiquitination of histone H2A 'Lys-119', rendering chromatin heritably changed in its expressibility. Component of a PRC1-like complex that mediates monoubiquitination of histone H2A 'Lys-119' on the X chromosome and is required for normal silencing of one copy of the X chromosome in XX females. May stimulate ubiquitination of histone H2A 'Lys-119' by recruiting the complex to target sites. Inhibits ubiquitination and subsequent degradation of TP53, and thereby plays a role in regulating transcription of TP53 target genes. May also regulate the ubiquitin-mediated proteasomal degradation of other proteins like FANK1 to regulate apoptosis. May be implicated in the regulation of the transcription as a repressor of the transcriptional activity of E4TF1. May bind to DNA. May play a role in the repression of tumor growth and metastasis in breast cancer by down-regulating SRRM3. In Homo sapiens (Human), this protein is RING1 and YY1-binding protein (RYBP).